The sequence spans 1097 residues: Leukemia inhibitory factor receptor (1097 aa).

An N-terminal signal peptide occupies residues 1-44; the sequence is MMDIYVCLKRPSWMVDNKRMRTASNFQWLLSTFILLYLMNQVNS. The Extracellular portion of the chain corresponds to 45 to 833; it reads QKKGAPHDLK…SMYVVTKENS (789 aa). The Fibronectin type-III 1 domain occupies 49-138; the sequence is APHDLKCVTN…EQNVSLIPDT (90 aa). Disulfide bonds link Cys-55–Cys-65 and Cys-82–Cys-90. Asn-64, Asn-85, Asn-131, Asn-143, Asn-191, Asn-243, and Asn-303 each carry an N-linked (GlcNAc...) asparagine glycan. A disulfide bridge links Cys-213 with Cys-270. 5 consecutive Fibronectin type-III domains span residues 335-434, 435-534, 538-629, 627-719, and 724-833; these read TPQQ…VYPH, TPTS…TEAS, GPDT…IPND, PNDD…IGYI, and PIVA…KENS. Cysteines 341 and 351 form a disulfide. Asn-390, Asn-407, Asn-426, Asn-445, Asn-481, and Asn-489 each carry an N-linked (GlcNAc...) asparagine glycan. An intrachain disulfide couples Cys-466 to Cys-511. A WSXWS motif motif is present at residues 519 to 523; that stretch reads WSKWS. Residues Asn-572, Asn-652, Asn-663, Asn-680, Asn-729, and Asn-787 are each glycosylated (N-linked (GlcNAc...) asparagine). Residues 834–858 traverse the membrane as a helical segment; the sequence is VGLIIAILIPVAVAVIVGVVTSILC. Residues 859–1097 are Cytoplasmic-facing; it reads YRKREWIKET…TNFFQNKPND (239 aa). The short motif at 869 to 877 is the Box 1 motif element; the sequence is FYPDIPNPE. Ser-927 is modified (phosphoserine). The interval 983–1005 is disordered; sequence PQAKPEEEQENDPVGGAGYKPQM. Residue Ser-1044 is modified to Phosphoserine. Residues 1066 to 1097 are disordered; the sequence is RQFLIPPKDEDSPKSNGGGWSFTNFFQNKPND. Residues 1086 to 1097 are compositionally biased toward polar residues; the sequence is SFTNFFQNKPND.

The protein belongs to the type I cytokine receptor family. Type 2 subfamily. Heterodimer composed of LIFR and IL6ST. The heterodimer formed by LIFR and IL6ST interacts with the complex formed by CNTF and CNTFR.

The protein localises to the cell membrane. The protein resides in the secreted. In terms of biological role, signal-transducing molecule. May have a common pathway with IL6ST. The soluble form inhibits the biological activity of LIF by blocking its binding to receptors on target cells. The sequence is that of Leukemia inhibitory factor receptor (LIFR) from Homo sapiens (Human).